Consider the following 84-residue polypeptide: Neurotoxin BmK-M10 (84 aa).

The signal sequence occupies residues 1–19; sequence MNYLVMISFALLLMKGVES. The region spanning 21–83 is the LCN-type CS-alpha/beta domain; that stretch reads RDAYIAKPEN…VPIRVPGKCQ (63 aa). Cystine bridges form between Cys-31–Cys-82, Cys-35–Cys-55, Cys-41–Cys-65, and Cys-45–Cys-67. Position 84 (Arg-84) is a propeptide, removed by a carboxypeptidase.

As to expression, expressed by the venom gland.

It localises to the secreted. In terms of biological role, binds to voltage-dependent sodium channels (Nav) and voltage-dependent delayed rectifier potassium channels and inhibits the inactivation of the activated channels, thereby blocking neuronal transmission. Administration to mice at a dosage of 0.8 mg/kg produces an analgesic effect. This chain is Neurotoxin BmK-M10, found in Olivierus martensii (Manchurian scorpion).